We begin with the raw amino-acid sequence, 920 residues long: Valine--tRNA ligase (920 aa).

The 'HIGH' region signature appears at 40 to 50 (PNVTGTLHMGH). Positions 522 to 526 (KMSKS) match the 'KMSKS' region motif. Position 525 (Lys525) interacts with ATP. Coiled coils occupy residues 642-668 (EWIR…DLLA) and 849-920 (AGVI…IESL).

The protein belongs to the class-I aminoacyl-tRNA synthetase family. ValS type 1 subfamily. As to quaternary structure, monomer.

Its subcellular location is the cytoplasm. It catalyses the reaction tRNA(Val) + L-valine + ATP = L-valyl-tRNA(Val) + AMP + diphosphate. Functionally, catalyzes the attachment of valine to tRNA(Val). As ValRS can inadvertently accommodate and process structurally similar amino acids such as threonine, to avoid such errors, it has a 'posttransfer' editing activity that hydrolyzes mischarged Thr-tRNA(Val) in a tRNA-dependent manner. This Coxiella burnetii (strain RSA 493 / Nine Mile phase I) protein is Valine--tRNA ligase.